The following is a 574-amino-acid chain: Proline--tRNA ligase (574 aa).

The protein belongs to the class-II aminoacyl-tRNA synthetase family. ProS type 1 subfamily. Homodimer.

It localises to the cytoplasm. It catalyses the reaction tRNA(Pro) + L-proline + ATP = L-prolyl-tRNA(Pro) + AMP + diphosphate. Catalyzes the attachment of proline to tRNA(Pro) in a two-step reaction: proline is first activated by ATP to form Pro-AMP and then transferred to the acceptor end of tRNA(Pro). As ProRS can inadvertently accommodate and process non-cognate amino acids such as alanine and cysteine, to avoid such errors it has two additional distinct editing activities against alanine. One activity is designated as 'pretransfer' editing and involves the tRNA(Pro)-independent hydrolysis of activated Ala-AMP. The other activity is designated 'posttransfer' editing and involves deacylation of mischarged Ala-tRNA(Pro). The misacylated Cys-tRNA(Pro) is not edited by ProRS. In Nitrosococcus oceani (strain ATCC 19707 / BCRC 17464 / JCM 30415 / NCIMB 11848 / C-107), this protein is Proline--tRNA ligase.